The primary structure comprises 545 residues: Chaperonin GroEL (545 aa).

Residues 30–33 (TLGP), K51, 87–91 (DGTTT), G415, and D496 each bind ATP.

Belongs to the chaperonin (HSP60) family. Forms a cylinder of 14 subunits composed of two heptameric rings stacked back-to-back. Interacts with the co-chaperonin GroES.

The protein resides in the cytoplasm. The enzyme catalyses ATP + H2O + a folded polypeptide = ADP + phosphate + an unfolded polypeptide.. Its function is as follows. Together with its co-chaperonin GroES, plays an essential role in assisting protein folding. The GroEL-GroES system forms a nano-cage that allows encapsulation of the non-native substrate proteins and provides a physical environment optimized to promote and accelerate protein folding. This is Chaperonin GroEL from Chlorobaculum tepidum (strain ATCC 49652 / DSM 12025 / NBRC 103806 / TLS) (Chlorobium tepidum).